Here is a 157-residue protein sequence, read N- to C-terminus: MAGKPLRCISVGKLKTPFWKDAAAHYLTRIKRWRHLEYTEVRDGDAALPPDQRNALEGRRIVEALAPQDVALVLDEHGQKLSSPQLAALLRRLDQEARGRACFVVGGAWGLDDSVRQRAFKVLSLSDMTLPHELARVVLLEQIYRAECILRKVPYHH.

S-adenosyl-L-methionine contacts are provided by residues L74, G106, and 125-130 (LSDMTL).

Belongs to the RNA methyltransferase RlmH family. Homodimer.

It localises to the cytoplasm. It catalyses the reaction pseudouridine(1915) in 23S rRNA + S-adenosyl-L-methionine = N(3)-methylpseudouridine(1915) in 23S rRNA + S-adenosyl-L-homocysteine + H(+). Its function is as follows. Specifically methylates the pseudouridine at position 1915 (m3Psi1915) in 23S rRNA. The protein is Ribosomal RNA large subunit methyltransferase H of Desulfovibrio desulfuricans (strain ATCC 27774 / DSM 6949 / MB).